The sequence spans 121 residues: UPF0102 protein Syncc9902_1284 (121 aa).

The protein belongs to the UPF0102 family.

The protein is UPF0102 protein Syncc9902_1284 of Synechococcus sp. (strain CC9902).